The primary structure comprises 299 residues: MKPDAHHVKQFLLRLQDDICQTLSAVDGANFVEDSWRREAGGGGRSRVLRNGGIFEQAGVNFSHVHGDAMPASATAHRPELAGRSFEAMGVSLVVHPHNPYIPTSHANVRFFIAEKPGADPVWWFGGGFDLTPYYGFEEDAVHWHRTARDLCQPFGDDVYPRYKKWCDDYFFLKHRNEQRGIGGLFFDDLNTPDFDHCFDFMQAVGNGYTRAYLPIVERRKAMVWGERERNFQLYRRGRYVEFNLVWDRGTLFGLQTGGRTESILMSMPPLVRWEYDWQPEAGSPEAALSEFIQVRDWI.

Residue Ser92 coordinates substrate. His96 and His106 together coordinate a divalent metal cation. Residue His106 is the Proton donor of the active site. 108-110 (NVR) provides a ligand contact to substrate. 2 residues coordinate a divalent metal cation: His145 and His175. The tract at residues 240–275 (YVEFNLVWDRGTLFGLQTGGRTESILMSMPPLVRWE) is important for dimerization. 258-260 (GGR) lines the substrate pocket.

It belongs to the aerobic coproporphyrinogen-III oxidase family. Homodimer. The cofactor is a divalent metal cation.

It is found in the cytoplasm. The enzyme catalyses coproporphyrinogen III + O2 + 2 H(+) = protoporphyrinogen IX + 2 CO2 + 2 H2O. The protein operates within porphyrin-containing compound metabolism; protoporphyrin-IX biosynthesis; protoporphyrinogen-IX from coproporphyrinogen-III (O2 route): step 1/1. In terms of biological role, involved in the heme biosynthesis. Catalyzes the aerobic oxidative decarboxylation of propionate groups of rings A and B of coproporphyrinogen-III to yield the vinyl groups in protoporphyrinogen-IX. The polypeptide is Oxygen-dependent coproporphyrinogen-III oxidase (Salmonella paratyphi B (strain ATCC BAA-1250 / SPB7)).